Reading from the N-terminus, the 368-residue chain is MTRLIVTTGGTGGHIFPALAVAEAAMRLSPGLDVLFIGGAGPEGELAAKAGLPFVALPAKGVFGRGIKALAAPFWMLRAFGLAGARIREFSPDVVCGFGGYAGFIPVAAARLMGVPTAIHEQNSVPGVTNKVLGRFVDRVFTTYPDEGGVFPATRTKRLGNPIRADIARAASAAPHPGTKRLLVLGGSQGAKAINDAVMAILPTLLDAGVKVRLQAGRADFERVTTQAHAVLAGREAKGDEPEVVIENFIDDMAAAYAWADLVLARAGATTLAEVTAAGKPSLLIPFPFATHDHQTVNAAFLARAGAAQSVAQNHLPGLDLAGTVIGLLGDPARLEAMGQAALGQALPHAADDIARALLAMAAHKGER.

UDP-N-acetyl-alpha-D-glucosamine is bound by residues 11 to 13 (TGG), N123, R164, S188, I250, and Q295.

This sequence belongs to the glycosyltransferase 28 family. MurG subfamily.

The protein resides in the cell inner membrane. The catalysed reaction is di-trans,octa-cis-undecaprenyl diphospho-N-acetyl-alpha-D-muramoyl-L-alanyl-D-glutamyl-meso-2,6-diaminopimeloyl-D-alanyl-D-alanine + UDP-N-acetyl-alpha-D-glucosamine = di-trans,octa-cis-undecaprenyl diphospho-[N-acetyl-alpha-D-glucosaminyl-(1-&gt;4)]-N-acetyl-alpha-D-muramoyl-L-alanyl-D-glutamyl-meso-2,6-diaminopimeloyl-D-alanyl-D-alanine + UDP + H(+). It participates in cell wall biogenesis; peptidoglycan biosynthesis. In terms of biological role, cell wall formation. Catalyzes the transfer of a GlcNAc subunit on undecaprenyl-pyrophosphoryl-MurNAc-pentapeptide (lipid intermediate I) to form undecaprenyl-pyrophosphoryl-MurNAc-(pentapeptide)GlcNAc (lipid intermediate II). The protein is UDP-N-acetylglucosamine--N-acetylmuramyl-(pentapeptide) pyrophosphoryl-undecaprenol N-acetylglucosamine transferase of Solidesulfovibrio magneticus (strain ATCC 700980 / DSM 13731 / RS-1) (Desulfovibrio magneticus).